A 178-amino-acid chain; its full sequence is Large ribosomal subunit protein uL6 (178 aa).

The segment at 159–178 (GKGIRYEGEHVRRKEGKTGK) is disordered.

Belongs to the universal ribosomal protein uL6 family. As to quaternary structure, part of the 50S ribosomal subunit.

This protein binds to the 23S rRNA, and is important in its secondary structure. It is located near the subunit interface in the base of the L7/L12 stalk, and near the tRNA binding site of the peptidyltransferase center. This chain is Large ribosomal subunit protein uL6, found in Listeria monocytogenes serotype 4b (strain CLIP80459).